The chain runs to 354 residues: UDP-3-O-acylglucosamine N-acyltransferase (354 aa).

Catalysis depends on histidine 258, which acts as the Proton acceptor.

Belongs to the transferase hexapeptide repeat family. LpxD subfamily. In terms of assembly, homotrimer.

It carries out the reaction a UDP-3-O-[(3R)-3-hydroxyacyl]-alpha-D-glucosamine + a (3R)-hydroxyacyl-[ACP] = a UDP-2-N,3-O-bis[(3R)-3-hydroxyacyl]-alpha-D-glucosamine + holo-[ACP] + H(+). Its pathway is bacterial outer membrane biogenesis; LPS lipid A biosynthesis. Functionally, catalyzes the N-acylation of UDP-3-O-acylglucosamine using 3-hydroxyacyl-ACP as the acyl donor. Is involved in the biosynthesis of lipid A, a phosphorylated glycolipid that anchors the lipopolysaccharide to the outer membrane of the cell. The protein is UDP-3-O-acylglucosamine N-acyltransferase of Sinorhizobium medicae (strain WSM419) (Ensifer medicae).